We begin with the raw amino-acid sequence, 217 residues long: GrpE protein homolog 1, mitochondrial (217 aa).

Residues 1 to 27 constitute a mitochondrion transit peptide; the sequence is MAARCVRLARRSLPALALSFRPSPRLL. The segment at 37-56 is disordered; the sequence is GQNLDEDLGHCEPKTDPPSA. Residue Lys94 is modified to N6-acetyllysine; alternate. An N6-succinyllysine; alternate modification is found at Lys94. Residue Lys100 is modified to N6-acetyllysine. N6-succinyllysine is present on Lys120. Lys215 carries the N6-acetyllysine; alternate modification. Lys215 is subject to N6-succinyllysine; alternate.

The protein belongs to the GrpE family. In terms of assembly, probable component of the PAM complex at least composed of a mitochondrial HSP70 protein, GRPEL1 or GRPEL2, TIMM44, TIMM16/PAM16 and TIMM14/DNAJC19. Binds to HSP70, HSC70 and HSJ1B.

The protein resides in the mitochondrion matrix. Essential component of the PAM complex, a complex required for the translocation of transit peptide-containing proteins from the inner membrane into the mitochondrial matrix in an ATP-dependent manner. Seems to control the nucleotide-dependent binding of mitochondrial HSP70 to substrate proteins. In Mus musculus (Mouse), this protein is GrpE protein homolog 1, mitochondrial (Grpel1).